Reading from the N-terminus, the 78-residue chain is Major outer membrane lipoprotein Lpp (78 aa).

Residues 1-20 (MNRTKLVLGAVILASTMLAG) form the signal peptide. C21 is lipidated: N-palmitoyl cysteine. Residue C21 is the site of S-diacylglycerol cysteine attachment. Repeats lie at residues 24 to 34 (NAKIDQLSSDV) and 38 to 48 (NAKVDQLSNDV). The stretch at 27-75 (IDQLSSDVQTLNAKVDQLSNDVNAVRADVQAAKDDAARANQRLDNQAQA) forms a coiled coil. K78 carries the N6-murein peptidoglycan lysine modification.

It belongs to the Lpp family. Homotrimer.

The protein localises to the cell outer membrane. It localises to the secreted. The protein resides in the cell wall. Functionally, a highly abundant outer membrane lipoprotein that controls the distance between the inner and outer membranes. The only protein known to be covalently linked to the peptidoglycan network (PGN). Also non-covalently binds the PGN. The link between the cell outer membrane and PGN contributes to maintenance of the structural and functional integrity of the cell envelope, and maintains the correct distance between the PGN and the outer membrane. The sequence is that of Major outer membrane lipoprotein Lpp from Yersinia pestis.